A 66-amino-acid polypeptide reads, in one-letter code: Large ribosomal subunit protein bL35 (66 aa).

The protein belongs to the bacterial ribosomal protein bL35 family.

The protein is Large ribosomal subunit protein bL35 of Afipia carboxidovorans (strain ATCC 49405 / DSM 1227 / KCTC 32145 / OM5) (Oligotropha carboxidovorans).